The following is a 186-amino-acid chain: Superoxide dismutase [Cu-Zn] (186 aa).

Residues 1 to 22 (MNMKTLLALAVSAVCSVSVAQA) form the signal peptide. Residues histidine 79, histidine 81, and histidine 104 each coordinate Cu cation. An intrachain disulfide couples cysteine 86 to cysteine 182. Positions 104, 113, 122, and 125 each coordinate Zn(2+). Histidine 160 is a Cu cation binding site.

This sequence belongs to the Cu-Zn superoxide dismutase family. In terms of assembly, homodimer. The cofactor is Cu cation. Zn(2+) serves as cofactor.

The protein resides in the periplasm. It carries out the reaction 2 superoxide + 2 H(+) = H2O2 + O2. Destroys radicals which are normally produced within the cells and which are toxic to biological systems. The chain is Superoxide dismutase [Cu-Zn] (sodC) from Neisseria meningitidis serogroup A / serotype 4A (strain DSM 15465 / Z2491).